The primary structure comprises 85 residues: Putative membrane protein insertion efficiency factor (85 aa).

Belongs to the UPF0161 family.

Its subcellular location is the cell membrane. Could be involved in insertion of integral membrane proteins into the membrane. This chain is Putative membrane protein insertion efficiency factor, found in Leifsonia xyli subsp. xyli (strain CTCB07).